Here is a 497-residue protein sequence, read N- to C-terminus: 4,4'-diaponeurosporene oxygenase (497 aa).

7 to 19 (VIGGGLGGISAAI) is a binding site for FAD.

It belongs to the carotenoid/retinoid oxidoreductase family. CrtP subfamily. The cofactor is FAD.

The enzyme catalyses all-trans-4,4'-diaponeurosporene + 2 AH2 + 2 O2 = 4,4'-diaponeurosporenal + 2 A + 3 H2O. It functions in the pathway carotenoid biosynthesis; staphyloxanthin biosynthesis; staphyloxanthin from farnesyl diphosphate: step 3/5. In terms of biological role, involved in the biosynthesis of the yellow-orange carotenoid staphyloxanthin, which plays a role in the virulence via its protective function against oxidative stress. Catalyzes the oxidation of the terminal methyl side group of 4,4'-diaponeurosporene to form 4,4'-diaponeurosporen-4-al. The sequence is that of 4,4'-diaponeurosporene oxygenase from Staphylococcus aureus (strain MSSA476).